Consider the following 405-residue polypeptide: Cytochrome P450 109 (405 aa).

Cys351 is a heme binding site.

It belongs to the cytochrome P450 family. It depends on heme as a cofactor.

In terms of biological role, cytochromes P450 are a group of heme-thiolate monooxygenases. They oxidize a variety of structurally unrelated compounds, including steroids, fatty acids, and xenobiotics. This Bacillus spizizenii (strain ATCC 23059 / NRRL B-14472 / W23) (Bacillus subtilis subsp. spizizenii) protein is Cytochrome P450 109 (cyp109).